The following is a 475-amino-acid chain: Sulfate adenylyltransferase subunit 1 (475 aa).

The region spanning 25-239 (KSLLRFLTCG…EVLETVEIQR (215 aa)) is the tr-type G domain. The G1 stretch occupies residues 34–41 (GSVDDGKS). 34–41 (GSVDDGKS) serves as a coordination point for GTP. A G2 region spans residues 92–96 (GITID). A G3 region spans residues 113–116 (DTPG). Residues 113-117 (DTPGH) and 168-171 (NKMD) contribute to the GTP site. Residues 168–171 (NKMD) form a G4 region. Positions 206–208 (SAL) are G5.

The protein belongs to the TRAFAC class translation factor GTPase superfamily. Classic translation factor GTPase family. CysN/NodQ subfamily. As to quaternary structure, heterodimer composed of CysD, the smaller subunit, and CysN.

The enzyme catalyses sulfate + ATP + H(+) = adenosine 5'-phosphosulfate + diphosphate. It participates in sulfur metabolism; hydrogen sulfide biosynthesis; sulfite from sulfate: step 1/3. With CysD forms the ATP sulfurylase (ATPS) that catalyzes the adenylation of sulfate producing adenosine 5'-phosphosulfate (APS) and diphosphate, the first enzymatic step in sulfur assimilation pathway. APS synthesis involves the formation of a high-energy phosphoric-sulfuric acid anhydride bond driven by GTP hydrolysis by CysN coupled to ATP hydrolysis by CysD. This is Sulfate adenylyltransferase subunit 1 from Escherichia coli O127:H6 (strain E2348/69 / EPEC).